The primary structure comprises 261 residues: MLKDVQNERDNRNIYLKRVGVKDLRYPIVVLDRTNVTQNTIATLNMFVDLPKDYRGTHMSRFIEVLNEYHLEINPKRIKEILRSLKKVLNAKRSVIEITFPFFLLKKAPVTGSESYLEYTCSFEAEMNGDHLDFSTTVTAPIHTLCPCSKEISEYGAHNQRAKCSVTFKSKEMVWIEDIIEIIEESASAPIFTLLKRADEKYVTEHAYDNPKFVEDVARDVALRLKKYDKIEWYKVEVESFESIHAHNAYACLTSDEIEKI.

The protein belongs to the GTP cyclohydrolase IV family.

It catalyses the reaction GTP + H2O = 7,8-dihydroneopterin 3'-triphosphate + formate + H(+). Its pathway is cofactor biosynthesis; 7,8-dihydroneopterin triphosphate biosynthesis; 7,8-dihydroneopterin triphosphate from GTP: step 1/1. Functionally, converts GTP to 7,8-dihydroneopterin triphosphate. In Fervidobacterium nodosum (strain ATCC 35602 / DSM 5306 / Rt17-B1), this protein is GTP cyclohydrolase FolE2.